The following is a 280-amino-acid chain: Type II restriction enzyme MboI (280 aa).

This sequence belongs to the DpnII type II restriction endonuclease family.

It carries out the reaction Endonucleolytic cleavage of DNA to give specific double-stranded fragments with terminal 5'-phosphates.. Its function is as follows. A P subtype restriction enzyme that recognizes the double-stranded unmethylated sequence 5'-GATC-3' and cleaves before G-1. The polypeptide is Type II restriction enzyme MboI (mboIR) (Moraxella bovis).